The primary structure comprises 193 residues: dTTP/UTP pyrophosphatase (193 aa).

Asp-70 (proton acceptor) is an active-site residue.

It belongs to the Maf family. YhdE subfamily. It depends on a divalent metal cation as a cofactor.

Its subcellular location is the cytoplasm. It carries out the reaction dTTP + H2O = dTMP + diphosphate + H(+). It catalyses the reaction UTP + H2O = UMP + diphosphate + H(+). In terms of biological role, nucleoside triphosphate pyrophosphatase that hydrolyzes dTTP and UTP. May have a dual role in cell division arrest and in preventing the incorporation of modified nucleotides into cellular nucleic acids. This Ruminiclostridium cellulolyticum (strain ATCC 35319 / DSM 5812 / JCM 6584 / H10) (Clostridium cellulolyticum) protein is dTTP/UTP pyrophosphatase.